We begin with the raw amino-acid sequence, 292 residues long: 33 kDa chaperonin (292 aa).

Disulfide bonds link Cys230/Cys232 and Cys263/Cys266.

Belongs to the HSP33 family. Under oxidizing conditions two disulfide bonds are formed involving the reactive cysteines. Under reducing conditions zinc is bound to the reactive cysteines and the protein is inactive.

It is found in the cytoplasm. Its function is as follows. Redox regulated molecular chaperone. Protects both thermally unfolding and oxidatively damaged proteins from irreversible aggregation. Plays an important role in the bacterial defense system toward oxidative stress. The sequence is that of 33 kDa chaperonin from Cronobacter sakazakii (strain ATCC BAA-894) (Enterobacter sakazakii).